Reading from the N-terminus, the 195-residue chain is 4'-phosphopantetheinyl transferase AcpT (195 aa).

The protein belongs to the P-Pant transferase superfamily. Gsp/Sfp/HetI/AcpT family.

The enzyme catalyses apo-[ACP] + CoA = holo-[ACP] + adenosine 3',5'-bisphosphate + H(+). May be involved in an alternative pathway for phosphopantetheinyl transfer and holo-ACP synthesis in E.coli. The native apo-protein substrate is unknown. Is able to functionally replace AcpS in vivo but only when expressed at high levels. This Escherichia coli O157:H7 protein is 4'-phosphopantetheinyl transferase AcpT (acpT).